The chain runs to 298 residues: Elongation factor Ts (298 aa).

An involved in Mg(2+) ion dislocation from EF-Tu region spans residues Thr80–Val83.

Belongs to the EF-Ts family.

Its subcellular location is the cytoplasm. Associates with the EF-Tu.GDP complex and induces the exchange of GDP to GTP. It remains bound to the aminoacyl-tRNA.EF-Tu.GTP complex up to the GTP hydrolysis stage on the ribosome. The protein is Elongation factor Ts of Acidovorax sp. (strain JS42).